The sequence spans 428 residues: Glutamine synthetase leaf isozyme, chloroplastic (428 aa).

The transit peptide at 1–49 (MAQILAPSIQCQTRITKTSPLATPISSKMWSSLVMKQNKKVARSAKFRV) directs the protein to the chloroplast. The 81-residue stretch at 75–155 (IIAEYIWIGG…VICDAYTPQG (81 aa)) folds into the GS beta-grasp domain. The region spanning 159–428 (PTNKRHKAAE…LAAQKIALKV (270 aa)) is the GS catalytic domain.

It belongs to the glutamine synthetase family. Homooctamer.

The protein resides in the plastid. It localises to the chloroplast. The enzyme catalyses L-glutamate + NH4(+) + ATP = L-glutamine + ADP + phosphate + H(+). Functionally, the light-modulated chloroplast enzyme, encoded by a nuclear gene and expressed primarily in leaves, is responsible for the reassimilation of the ammonia generated by photorespiration. This chain is Glutamine synthetase leaf isozyme, chloroplastic (GS2), found in Medicago sativa (Alfalfa).